The primary structure comprises 377 residues: MLKFRNFFKLTLLTLASAFFLSGCANINLISAVGSSSVQPLLNKLSSYYVLNENNDNDKLVEISVQAGGSNAGIRAIINGFADIGNVSKNPKEYAKENEKKWRDKKLKTLTIGKDAIAVIYKAPQELKGKLLLTKDNINDLYDLFAGVKTINIDKFVKKDTKNMSNEKDYPLTSFPRTGGSFASGTAEAFLNFSALKSDKTLDSQTRDILKGIINYGPLAKPTSETNIEAFNTFVTNLQDPNLFGMIYLSLGFIQNNLQAIKNNGFEILPIKYENKEVLPSNQTVSQNEYKWVRPLNSIVSLSEENKNIDEIKTFFNWLFFNGKKDVIKNIYDEFGILQLTEDEKKKMFKTNDSSPMNLENFWVDDFAFSNPIFGAF.

Residues 1 to 23 (MLKFRNFFKLTLLTLASAFFLSG) form the signal peptide. C24 carries the N-palmitoyl cysteine lipid modification. The S-diacylglycerol cysteine moiety is linked to residue C24.

The protein resides in the cell membrane. This is an uncharacterized protein from Mycoplasma genitalium (strain ATCC 33530 / DSM 19775 / NCTC 10195 / G37) (Mycoplasmoides genitalium).